Here is a 785-residue protein sequence, read N- to C-terminus: Endonuclease MutS2 (785 aa).

333 to 340 (GPNTGGKT) serves as a coordination point for ATP. Residues 710–785 (LDLRGQRYDE…GNGATIVQLK (76 aa)) enclose the Smr domain.

The protein belongs to the DNA mismatch repair MutS family. MutS2 subfamily. In terms of assembly, homodimer. Binds to stalled ribosomes, contacting rRNA.

Functionally, endonuclease that is involved in the suppression of homologous recombination and thus may have a key role in the control of bacterial genetic diversity. Its function is as follows. Acts as a ribosome collision sensor, splitting the ribosome into its 2 subunits. Detects stalled/collided 70S ribosomes which it binds and splits by an ATP-hydrolysis driven conformational change. Acts upstream of the ribosome quality control system (RQC), a ribosome-associated complex that mediates the extraction of incompletely synthesized nascent chains from stalled ribosomes and their subsequent degradation. Probably generates substrates for RQC. This chain is Endonuclease MutS2, found in Lactobacillus acidophilus (strain ATCC 700396 / NCK56 / N2 / NCFM).